We begin with the raw amino-acid sequence, 438 residues long: UDP-N-acetylmuramoylalanine--D-glutamate ligase (438 aa).

112 to 118 (GSNGKST) is a binding site for ATP.

The protein belongs to the MurCDEF family. The cofactor is Mg(2+).

It is found in the cytoplasm. The enzyme catalyses UDP-N-acetyl-alpha-D-muramoyl-L-alanine + D-glutamate + ATP = UDP-N-acetyl-alpha-D-muramoyl-L-alanyl-D-glutamate + ADP + phosphate + H(+). It functions in the pathway cell wall biogenesis; peptidoglycan biosynthesis. Its function is as follows. Cell wall formation. Catalyzes the addition of glutamate to the nucleotide precursor UDP-N-acetylmuramoyl-L-alanine (UMA). The sequence is that of UDP-N-acetylmuramoylalanine--D-glutamate ligase (murD) from Escherichia coli (strain K12).